Here is a 66-residue protein sequence, read N- to C-terminus: Neurotoxin-like protein STR1 (66 aa).

In terms of domain architecture, LCN-type CS-alpha/beta spans 2–65 (RDGYIVHDGT…VWGEDGFMCW (64 aa)). Disulfide bonds link C13–C64, C17–C40, C26–C45, and C30–C47.

It belongs to the long (4 C-C) scorpion toxin superfamily. Sodium channel inhibitor family. Beta subfamily. As to expression, expressed by the venom gland.

It is found in the secreted. Its function is as follows. This protein is not toxic. The chain is Neurotoxin-like protein STR1 from Androctonus australis (Sahara scorpion).